Here is a 458-residue protein sequence, read N- to C-terminus: Argininosuccinate lyase (458 aa).

Belongs to the lyase 1 family. Argininosuccinate lyase subfamily.

The protein resides in the cytoplasm. It carries out the reaction 2-(N(omega)-L-arginino)succinate = fumarate + L-arginine. It participates in amino-acid biosynthesis; L-arginine biosynthesis; L-arginine from L-ornithine and carbamoyl phosphate: step 3/3. This chain is Argininosuccinate lyase, found in Salmonella typhimurium (strain LT2 / SGSC1412 / ATCC 700720).